Consider the following 608-residue polypeptide: UvrABC system protein C (608 aa).

In terms of domain architecture, GIY-YIG spans 15–93 (HQPGVYRMYN…IKQYLPKYNV (79 aa)). A UVR domain is found at 203–238 (RQVIQSLVEQMEGASQALNFEKAATIRDQIQSMRRV).

It belongs to the UvrC family. In terms of assembly, interacts with UvrB in an incision complex.

Its subcellular location is the cytoplasm. In terms of biological role, the UvrABC repair system catalyzes the recognition and processing of DNA lesions. UvrC both incises the 5' and 3' sides of the lesion. The N-terminal half is responsible for the 3' incision and the C-terminal half is responsible for the 5' incision. In Aliivibrio salmonicida (strain LFI1238) (Vibrio salmonicida (strain LFI1238)), this protein is UvrABC system protein C.